The following is a 272-amino-acid chain: 2-dehydro-3-deoxyphosphooctonate aldolase (272 aa).

The protein belongs to the KdsA family.

Its subcellular location is the cytoplasm. It carries out the reaction D-arabinose 5-phosphate + phosphoenolpyruvate + H2O = 3-deoxy-alpha-D-manno-2-octulosonate-8-phosphate + phosphate. The protein operates within carbohydrate biosynthesis; 3-deoxy-D-manno-octulosonate biosynthesis; 3-deoxy-D-manno-octulosonate from D-ribulose 5-phosphate: step 2/3. It functions in the pathway bacterial outer membrane biogenesis; lipopolysaccharide biosynthesis. The chain is 2-dehydro-3-deoxyphosphooctonate aldolase from Geotalea uraniireducens (strain Rf4) (Geobacter uraniireducens).